Consider the following 422-residue polypeptide: Regulator of sigma-W protease RasP (422 aa).

4 helical membrane-spanning segments follow: residues 6 to 26, 175 to 195, 346 to 366, and 394 to 414; these read VIAFIIIFGTLVFFHELGHLL, IAAGPIMNFILAYVILVMLGL, IVNLFQFAAFLSINLGIVNLL, and EAFVVFIGVAFLMLLMLVVTW. Zn(2+) is bound at residue His20. Glu21 is a catalytic residue. His24 provides a ligand contact to Zn(2+). Positions 186-271 constitute a PDZ domain; the sequence is AYVILVMLGL…TLHISVTPEA (86 aa).

Belongs to the peptidase M50B family. The cofactor is Zn(2+).

It localises to the cell membrane. Functionally, is responsible for site-2 cleavage of the RsiW anti-sigma factor. This results, after a third proteolytic step catalyzed by the ClpXP protease, in the release of SigW and the transcription activation of the genes under the control of the sigma-W factor. Can also cleave liberated signal peptides of PenP and Mpr, probably within in the cell membrane. The polypeptide is Regulator of sigma-W protease RasP (Bacillus subtilis (strain 168)).